Reading from the N-terminus, the 440-residue chain is Xylose isomerase (440 aa).

Residues H100 and D103 contribute to the active site. The Mg(2+) site is built by E231, E267, H270, D295, D306, D308, and D338.

The protein belongs to the xylose isomerase family. In terms of assembly, homotetramer. The cofactor is Mg(2+).

It localises to the cytoplasm. The enzyme catalyses alpha-D-xylose = alpha-D-xylulofuranose. This chain is Xylose isomerase, found in Burkholderia ambifaria (strain MC40-6).